The following is a 335-amino-acid chain: Holliday junction branch migration complex subunit RuvB (335 aa).

Positions 4-184 (ADRIISTSAK…FGIVQRLEFY (181 aa)) are large ATPase domain (RuvB-L). Residues I23, R24, G65, K68, T69, T70, 131–133 (EDY), R174, Y184, and R221 each bind ATP. Residue T69 participates in Mg(2+) binding. Residues 185–255 (AVEDLTSIVA…SAKAALLMLD (71 aa)) form a small ATPAse domain (RuvB-S) region. Residues 258-335 (DAGFDYLDRK…RYFGLEKLTE (78 aa)) form a head domain (RuvB-H) region. Residues R294, R313, and R318 each contribute to the DNA site.

Belongs to the RuvB family. Homohexamer. Forms an RuvA(8)-RuvB(12)-Holliday junction (HJ) complex. HJ DNA is sandwiched between 2 RuvA tetramers; dsDNA enters through RuvA and exits via RuvB. An RuvB hexamer assembles on each DNA strand where it exits the tetramer. Each RuvB hexamer is contacted by two RuvA subunits (via domain III) on 2 adjacent RuvB subunits; this complex drives branch migration. In the full resolvosome a probable DNA-RuvA(4)-RuvB(12)-RuvC(2) complex forms which resolves the HJ.

The protein localises to the cytoplasm. The catalysed reaction is ATP + H2O = ADP + phosphate + H(+). In terms of biological role, the RuvA-RuvB-RuvC complex processes Holliday junction (HJ) DNA during genetic recombination and DNA repair, while the RuvA-RuvB complex plays an important role in the rescue of blocked DNA replication forks via replication fork reversal (RFR). RuvA specifically binds to HJ cruciform DNA, conferring on it an open structure. The RuvB hexamer acts as an ATP-dependent pump, pulling dsDNA into and through the RuvAB complex. RuvB forms 2 homohexamers on either side of HJ DNA bound by 1 or 2 RuvA tetramers; 4 subunits per hexamer contact DNA at a time. Coordinated motions by a converter formed by DNA-disengaged RuvB subunits stimulates ATP hydrolysis and nucleotide exchange. Immobilization of the converter enables RuvB to convert the ATP-contained energy into a lever motion, pulling 2 nucleotides of DNA out of the RuvA tetramer per ATP hydrolyzed, thus driving DNA branch migration. The RuvB motors rotate together with the DNA substrate, which together with the progressing nucleotide cycle form the mechanistic basis for DNA recombination by continuous HJ branch migration. Branch migration allows RuvC to scan DNA until it finds its consensus sequence, where it cleaves and resolves cruciform DNA. The sequence is that of Holliday junction branch migration complex subunit RuvB from Pasteurella multocida (strain Pm70).